We begin with the raw amino-acid sequence, 86 residues long: Large ribosomal subunit protein uL23 (86 aa).

The protein belongs to the universal ribosomal protein uL23 family. In terms of assembly, part of the 50S ribosomal subunit. Contacts protein L29.

Functionally, binds to 23S rRNA. One of the proteins that surrounds the polypeptide exit tunnel on the outside of the ribosome. The sequence is that of Large ribosomal subunit protein uL23 from Caldivirga maquilingensis (strain ATCC 700844 / DSM 13496 / JCM 10307 / IC-167).